We begin with the raw amino-acid sequence, 346 residues long: Elongation factor Ts (346 aa).

Positions 80–83 (TDFV) are involved in Mg(2+) ion dislocation from EF-Tu.

It belongs to the EF-Ts family.

The protein localises to the cytoplasm. In terms of biological role, associates with the EF-Tu.GDP complex and induces the exchange of GDP to GTP. It remains bound to the aminoacyl-tRNA.EF-Tu.GTP complex up to the GTP hydrolysis stage on the ribosome. This is Elongation factor Ts (tsf) from Streptococcus pneumoniae (strain ATCC BAA-255 / R6).